We begin with the raw amino-acid sequence, 476 residues long: Bridging integrator 2 (476 aa).

A BAR domain is found at 26–242 (VLQKLGKTVE…MGKLDKQHSS (217 aa)). Disordered regions lie at residues 269 to 369 (YPCP…TEGA) and 395 to 476 (GAAP…LTPL). The span at 279 to 292 (EPSSGAEQTPTSPR) shows a compositional bias: polar residues. Residues 310 to 324 (PAEPGAPMPGPPPAS) show a composition bias toward pro residues. Positions 325–339 (PTSVRSASESESECS) are enriched in low complexity. The segment covering 340–353 (GESREIDLSPKEME) has biased composition (basic and acidic residues). Polar residues predominate over residues 461-476 (VSCNPPQDPSESLTPL).

It is found in the cytoplasm. The chain is Bridging integrator 2 (BIN2) from Gallus gallus (Chicken).